The chain runs to 259 residues: Tryptophan synthase alpha chain (259 aa).

Catalysis depends on proton acceptor residues E52 and D63.

Belongs to the TrpA family. As to quaternary structure, tetramer of two alpha and two beta chains.

The enzyme catalyses (1S,2R)-1-C-(indol-3-yl)glycerol 3-phosphate + L-serine = D-glyceraldehyde 3-phosphate + L-tryptophan + H2O. The protein operates within amino-acid biosynthesis; L-tryptophan biosynthesis; L-tryptophan from chorismate: step 5/5. The alpha subunit is responsible for the aldol cleavage of indoleglycerol phosphate to indole and glyceraldehyde 3-phosphate. This is Tryptophan synthase alpha chain from Streptococcus gordonii (strain Challis / ATCC 35105 / BCRC 15272 / CH1 / DL1 / V288).